A 206-amino-acid chain; its full sequence is MAKQGMLIVLSGPSGVGKGTVRKEIFDSDDNDFQYSVSMTTRQMRPGEVDGKDYYFVSKEEFEDEIKSGGMLEYAKYVDNYYGTPLKYIKQSLAAGKDVFLEIEVNGAMQVREKMPDGVFIFLTPPDLMELKHRIIGRGTDDMSVINKRMAKAVDEIKMMRNYDYAVINDEVPLAAERIKAIIRSERFSVKRVMPEYEEMLGDAES.

Positions 5–184 (GMLIVLSGPS…AAERIKAIIR (180 aa)) constitute a Guanylate kinase-like domain. 12–19 (GPSGVGKG) lines the ATP pocket.

It belongs to the guanylate kinase family.

Its subcellular location is the cytoplasm. It carries out the reaction GMP + ATP = GDP + ADP. Functionally, essential for recycling GMP and indirectly, cGMP. This chain is Guanylate kinase, found in Lactiplantibacillus plantarum (strain ATCC BAA-793 / NCIMB 8826 / WCFS1) (Lactobacillus plantarum).